Consider the following 194-residue polypeptide: Glycerol-3-phosphate acyltransferase (194 aa).

Helical transmembrane passes span 3–23, 47–67, 78–97, 112–132, and 153–173; these read IALL…LIVG, VLGK…GVLP, IHGI…PIYL, ILGV…TLLF, and LFFD…LIII.

It belongs to the PlsY family. In terms of assembly, probably interacts with PlsX.

It localises to the cell membrane. It catalyses the reaction an acyl phosphate + sn-glycerol 3-phosphate = a 1-acyl-sn-glycero-3-phosphate + phosphate. Its pathway is lipid metabolism; phospholipid metabolism. Functionally, catalyzes the transfer of an acyl group from acyl-phosphate (acyl-PO(4)) to glycerol-3-phosphate (G3P) to form lysophosphatidic acid (LPA). This enzyme utilizes acyl-phosphate as fatty acyl donor, but not acyl-CoA or acyl-ACP. In Macrococcus caseolyticus (strain JCSC5402) (Macrococcoides caseolyticum), this protein is Glycerol-3-phosphate acyltransferase.